A 111-amino-acid chain; its full sequence is Universal stress protein B (111 aa).

2 helical membrane-spanning segments follow: residues M1–R21 and F90–W110.

The protein belongs to the universal stress protein B family.

It localises to the cell inner membrane. This Yersinia enterocolitica serotype O:8 / biotype 1B (strain NCTC 13174 / 8081) protein is Universal stress protein B.